Consider the following 38-residue polypeptide: Toxin CSTX-16 (38 aa).

A glutamine amide mark is found at Gln-19 and Gln-38.

This sequence belongs to the cationic peptide 04 (cupiennin) family. 10 (double chain) subfamily. As to expression, expressed by the venom gland.

It localises to the secreted. The chain is Toxin CSTX-16 from Cupiennius salei (American wandering spider).